The primary structure comprises 261 residues: Zinc finger protein 664 (261 aa).

9 C2H2-type zinc fingers span residues 3–25, 31–53, 59–81, 87–109, 115–137, 143–165, 171–193, 199–221, and 227–249; these read YKCP…QKIH, HKCD…WRDH, YKCD…KKIH, YKCY…MRVH, YVCS…QRVH, FKCE…QRVH, YKCY…QRVH, YRCC…QRVH, and FKCD…QRVH. Residue Lys257 forms a Glycyl lysine isopeptide (Lys-Gly) (interchain with G-Cter in SUMO2) linkage.

Belongs to the krueppel C2H2-type zinc-finger protein family.

The protein resides in the nucleus. Its function is as follows. May be involved in transcriptional regulation. The polypeptide is Zinc finger protein 664 (Homo sapiens (Human)).